A 445-amino-acid polypeptide reads, in one-letter code: Histidinol dehydrogenase (445 aa).

NAD(+) contacts are provided by tyrosine 134, glutamine 198, and asparagine 226. Residues threonine 249, glutamine 271, and histidine 274 each coordinate substrate. Residues glutamine 271 and histidine 274 each coordinate Zn(2+). Catalysis depends on proton acceptor residues glutamate 340 and histidine 341. Positions 341, 374, 428, and 433 each coordinate substrate. Residue aspartate 374 participates in Zn(2+) binding. Residue histidine 433 participates in Zn(2+) binding.

The protein belongs to the histidinol dehydrogenase family. The cofactor is Zn(2+).

The enzyme catalyses L-histidinol + 2 NAD(+) + H2O = L-histidine + 2 NADH + 3 H(+). It participates in amino-acid biosynthesis; L-histidine biosynthesis; L-histidine from 5-phospho-alpha-D-ribose 1-diphosphate: step 9/9. Its function is as follows. Catalyzes the sequential NAD-dependent oxidations of L-histidinol to L-histidinaldehyde and then to L-histidine. The chain is Histidinol dehydrogenase from Nocardia farcinica (strain IFM 10152).